The sequence spans 120 residues: Small ribosomal subunit protein bS16 (120 aa).

The interval 84–120 is disordered; it reads KRESRNNPQQGQPKKKAQERAAAAAAAAEKAASEAAA. Residues 103–120 show a composition bias toward low complexity; it reads RAAAAAAAAEKAASEAAA.

It belongs to the bacterial ribosomal protein bS16 family.

This Beijerinckia indica subsp. indica (strain ATCC 9039 / DSM 1715 / NCIMB 8712) protein is Small ribosomal subunit protein bS16.